A 189-amino-acid chain; its full sequence is uncharacterized protein (189 aa).

Residues 1–19 (MKRVLFFLLMIFVSFGVIA) form the signal peptide.

This is an uncharacterized protein from Escherichia coli (strain K12).